The primary structure comprises 389 residues: Probable nitrate transporter NarT (389 aa).

A run of 12 helical transmembrane segments spans residues 14–34 (TLSL…MPFI), 45–65 (ISII…PFGY), 69–89 (IVGA…PIFF), 97–117 (GMLM…SVGV), 139–159 (GNIG…IIGW), 161–181 (TTVR…FIFG), 211–231 (WYFI…NYLV), 246–266 (GVFI…GDKF), 268–288 (AVKV…ILGI), 294–314 (LFTV…GLIF), 331–351 (IVSM…TYVA), and 353–373 (LTGS…IALF).

Belongs to the major facilitator superfamily. Nitrate/nitrite porter (TC 2.A.1.8) family.

It localises to the cell membrane. Functionally, probably required for nitrate uptake under anoxic conditions. Also possibly involved in excretion of nitrite produced by the dissimilatory reduction of nitrate. The polypeptide is Probable nitrate transporter NarT (narT) (Staphylococcus aureus (strain USA300)).